The chain runs to 316 residues: L-lactate dehydrogenase 3 (316 aa).

NAD(+) is bound by residues V16, D37, R42, and Y68. R91 lines the substrate pocket. NAD(+) contacts are provided by residues S104, 121–123 (ASN), and T146. 123-126 (NPVD) contacts substrate. Position 151–154 (151–154 (DSSR)) interacts with substrate. R156 and H171 together coordinate beta-D-fructose 1,6-bisphosphate. The active-site Proton acceptor is the H178. Position 233 (T233) interacts with substrate.

The protein belongs to the LDH/MDH superfamily. LDH family. Homotetramer.

The protein resides in the cytoplasm. It carries out the reaction (S)-lactate + NAD(+) = pyruvate + NADH + H(+). It participates in fermentation; pyruvate fermentation to lactate; (S)-lactate from pyruvate: step 1/1. With respect to regulation, allosterically activated by fructose 1,6-bisphosphate (FBP). Functionally, catalyzes the conversion of lactate to pyruvate. The chain is L-lactate dehydrogenase 3 from Bacillus anthracis.